A 371-amino-acid chain; its full sequence is Flagellar P-ring protein (371 aa).

The first 25 residues, 1-25 (MTMRVCKWLLTFALLFAATLTPAHS), serve as a signal peptide directing secretion.

This sequence belongs to the FlgI family. The basal body constitutes a major portion of the flagellar organelle and consists of four rings (L,P,S, and M) mounted on a central rod.

It is found in the periplasm. It localises to the bacterial flagellum basal body. Its function is as follows. Assembles around the rod to form the L-ring and probably protects the motor/basal body from shearing forces during rotation. In Sinorhizobium fredii (strain NBRC 101917 / NGR234), this protein is Flagellar P-ring protein.